A 459-amino-acid polypeptide reads, in one-letter code: tRNA modification GTPase MnmE (459 aa).

(6S)-5-formyl-5,6,7,8-tetrahydrofolate contacts are provided by arginine 30, glutamate 93, and lysine 132. Positions 226 to 381 (GVTMAIVGKP…LEEKILESVK (156 aa)) constitute a TrmE-type G domain. Residue asparagine 236 coordinates K(+). Residues 236–241 (NVGKST), 255–261 (TDIPGTT), and 280–283 (DTAG) contribute to the GTP site. Residue serine 240 participates in Mg(2+) binding. K(+)-binding residues include threonine 255, isoleucine 257, and threonine 260. Residue threonine 261 participates in Mg(2+) binding. Lysine 459 is a binding site for (6S)-5-formyl-5,6,7,8-tetrahydrofolate.

It belongs to the TRAFAC class TrmE-Era-EngA-EngB-Septin-like GTPase superfamily. TrmE GTPase family. In terms of assembly, homodimer. Heterotetramer of two MnmE and two MnmG subunits. K(+) is required as a cofactor.

Its subcellular location is the cytoplasm. Exhibits a very high intrinsic GTPase hydrolysis rate. Involved in the addition of a carboxymethylaminomethyl (cmnm) group at the wobble position (U34) of certain tRNAs, forming tRNA-cmnm(5)s(2)U34. This Fervidobacterium nodosum (strain ATCC 35602 / DSM 5306 / Rt17-B1) protein is tRNA modification GTPase MnmE.